A 209-amino-acid polypeptide reads, in one-letter code: Uracil phosphoribosyltransferase (209 aa).

5-phospho-alpha-D-ribose 1-diphosphate-binding positions include R79, R104, and 131 to 139 (DPMLATGGS). Uracil contacts are provided by residues I194 and 199–201 (GDA). Residue D200 participates in 5-phospho-alpha-D-ribose 1-diphosphate binding.

This sequence belongs to the UPRTase family. Mg(2+) serves as cofactor.

The enzyme catalyses UMP + diphosphate = 5-phospho-alpha-D-ribose 1-diphosphate + uracil. It participates in pyrimidine metabolism; UMP biosynthesis via salvage pathway; UMP from uracil: step 1/1. With respect to regulation, allosterically activated by GTP. Catalyzes the conversion of uracil and 5-phospho-alpha-D-ribose 1-diphosphate (PRPP) to UMP and diphosphate. This chain is Uracil phosphoribosyltransferase, found in Clostridium acetobutylicum (strain ATCC 824 / DSM 792 / JCM 1419 / IAM 19013 / LMG 5710 / NBRC 13948 / NRRL B-527 / VKM B-1787 / 2291 / W).